We begin with the raw amino-acid sequence, 5085 residues long: Protein piccolo (5085 aa).

Over residues 1–20 (MGNEASLEGEGLPEGLAAAA) the composition is skewed to low complexity. Disordered regions lie at residues 1-142 (MGNE…DFKE) and 173-516 (DLIS…TPAQ). Residues 92 to 101 (PGKPPDPGRP) show a composition bias toward pro residues. Composition is skewed to basic and acidic residues over residues 110–121 (RTTDTFRSEQKL), 132–142 (KESKSRTDFKE), and 184–198 (ETTK…EQGK). Phosphoserine occurs at positions 211 and 231. Residues 227–240 (QQDSSPKSVSSQQA) are compositionally biased toward polar residues. The segment covering 253–268 (PSQQSPAQTPAQQASP) has biased composition (low complexity). 3 stretches are compositionally biased toward polar residues: residues 275–285 (QPGSAKATVQQ), 318–332 (KTSS…SLAQ), and 375–391 (TPAQ…QQPG). The interval 372–491 (PTKTPAQQSG…LAKPSAQQPT (120 aa)) is 12 X 10 AA tandem approximate repeats of P-A-K-P-Q-P-Q-Q-P-X. Residues 392-408 (PTKPSPQQPIPAKPQPQ) are compositionally biased toward pro residues. Positions 409 to 423 (QPVATKTQPQQSAPA) are enriched in low complexity. A compositionally biased stretch (pro residues) spans 424–472 (KPQPQQPAPAKPQPQQPTPAKPQPQPPTPAKPQPQPPTATKPQPQPPTA). Positions 486 to 499 (SAQQPTKSISQTVT) are enriched in polar residues. Residues 523-547 (CPLCNTTELLLHIPEKANFNTCTEC) form a C4-type zinc finger. Disordered stretches follow at residues 586–880 (AAIP…TVTG), 896–1012 (LIST…ACPL), 1069–1357 (QLGD…PSDL), 1373–1604 (STLV…EELV), and 1622–1815 (TIAD…SDPE). The segment covering 596 to 613 (PKAATAPTATASKSPVPS) has biased composition (low complexity). Residues 618–654 (PKKEPPSKQDSPKALESKKPPEPKKPPEPKKPPEPKK) show a composition bias toward basic and acidic residues. Residues 672-682 (APQLPVAEALP) show a composition bias toward low complexity. The span at 683-693 (EPAPPKEPSGP) shows a compositional bias: pro residues. A compositionally biased stretch (basic and acidic residues) spans 705 to 717 (VEPKQPKMTETRA). The span at 718 to 767 (DIQSSSTTKPDILSSQVQSQAQVKTASPLKTDSAKPSQSFPPTGEKTTPL) shows a compositional bias: polar residues. The span at 790–808 (ESKDPKHIDPIQKKDEPKK) shows a compositional bias: basic and acidic residues. Residues Ser-857 and Ser-869 each carry the phosphoserine modification. Polar residues-rich tracts occupy residues 867–878 (PKSQPTTPQETV), 896–906 (LISTAGQQGPH), and 917–936 (QAPT…STGQ). Thr-873 is modified (phosphothreonine). Basic and acidic residues predominate over residues 990–1004 (EPEKAVPAHKPDKTT). The C4-type zinc finger occupies 1010–1033 (CPLCRTELNLGSQEPPNFNTCTEC). Residues 1077–1092 (PPAPSGPKASPMPAPA) are compositionally biased toward pro residues. A compositionally biased stretch (basic and acidic residues) spans 1110 to 1129 (KEAEGKTEAEKPVPEKETAS). Phosphothreonine is present on Thr-1133. Composition is skewed to basic and acidic residues over residues 1141–1150 (QKLEESEGKK), 1157–1199 (PEKK…KLPP), and 1274–1295 (SSKD…DKSD). The span at 1300–1318 (QQPKSPQGLSDTGYSSDGI) shows a compositional bias: polar residues. Residues Ser-1304, Ser-1314, Ser-1315, Ser-1344, Ser-1346, Ser-1349, Ser-1350, and Ser-1353 each carry the phosphoserine modification. The span at 1331-1345 (SDEKDLLKGLKKDSF) shows a compositional bias: basic and acidic residues. Positions 1346–1355 (SQESSPSSPS) are enriched in low complexity. Over residues 1378-1396 (EKAEKKTQPQKISPEKPQD) the composition is skewed to basic and acidic residues. A compositionally biased stretch (polar residues) spans 1397–1407 (QQKTQTASETL). The segment covering 1417 to 1456 (KESQEKKVSPKKDSEQGFPSRKEHKEKPELVDDLSPRRAS) has biased composition (basic and acidic residues). 9 positions are modified to phosphoserine: Ser-1451, Ser-1463, Ser-1464, Ser-1466, Ser-1469, Ser-1493, Ser-1496, Ser-1517, and Ser-1519. A compositionally biased stretch (acidic residues) spans 1511-1523 (SADEDASGSEDEE). Position 1564 is a phosphothreonine (Thr-1564). Ser-1565, Ser-1575, and Ser-1587 each carry phosphoserine. Acidic residues predominate over residues 1578–1587 (DEDDETFDES). The span at 1588–1599 (PELKFRETKSQE) shows a compositional bias: basic and acidic residues. Positions 1622–1635 (TIADKYSSESSQKK) are enriched in polar residues. The segment covering 1640–1650 (FDEEPELEMES) has biased composition (acidic residues). At Ser-1650 the chain carries Phosphoserine. At Thr-1652 the chain carries Phosphothreonine. A phosphoserine mark is found at Ser-1654 and Ser-1659. A compositionally biased stretch (polar residues) spans 1662-1679 (EGSSSLHASSFTPGTSPT). Acidic residues predominate over residues 1719–1732 (DSSEEEELREEEEL). 2 positions are modified to phosphoserine: Ser-1720 and Ser-1721. Residues 1733-1746 (LKEQEKQRELEQQQ) show a composition bias toward basic and acidic residues. At Thr-1772 the chain carries Phosphothreonine. The residue at position 1778 (Ser-1778) is a Phosphoserine. Residues 1787–1802 (EELRQAAEMEELHRSS) are compositionally biased toward basic and acidic residues. 4 positions are modified to phosphoserine: Ser-1807, Ser-1812, Ser-1820, and Ser-1841. Disordered regions lie at residues 2116–2139 (PSES…SSVC), 2275–2385 (ELTK…PTYP), and 2456–2486 (KPPI…TGLS). Low complexity predominate over residues 2121 to 2139 (TSVPPSDTPSLTSSISSVC). Positions 2350-2384 (QPPPPPPPPPPSPSTSSPPPTPPLPPATSPKPPTY) are enriched in pro residues. At Ser-2511 the chain carries Phosphoserine. Thr-2702 carries O-linked (GlcNAc) threonine glycosylation. A glycan (O-linked (GlcNAc) serine) is linked at Ser-2976. A Phosphothreonine modification is found at Thr-3014. 2 disordered regions span residues 3350–3457 (KEEK…PLSK) and 3503–3572 (KTYK…LYSP). The residue at position 3374 (Ser-3374) is a Phosphoserine. Basic and acidic residues predominate over residues 3377–3386 (DDPRNLKKIV). Ser-3388 carries the phosphoserine modification. 2 positions are modified to phosphothreonine: Thr-3392 and Thr-3419. Positions 3419–3428 (TDDEDQDEWD) are enriched in acidic residues. Over residues 3511-3523 (GCQTETDSDTQSP) the composition is skewed to polar residues. Residues Ser-3522, Ser-3530, Ser-3561, Ser-3565, Ser-3571, Ser-3574, Ser-3577, Ser-3598, Ser-3624, Ser-3626, and Ser-3632 each carry the phosphoserine modification. 2 disordered regions span residues 3602-3695 (VLHP…ASRR) and 3774-3816 (AEDR…FIPP). Polar residues-rich tracts occupy residues 3647-3663 (EGFT…SGTQ) and 3679-3691 (STGT…TMGT). Ser-3781 is subject to Phosphoserine. Residues 3791–3803 (SRVESQHGVERPR) show a composition bias toward basic and acidic residues. A compositionally biased stretch (polar residues) spans 3805 to 3816 (APQTEFSQFIPP). Residues Ser-4034 and Ser-4150 each carry the phosphoserine modification. Disordered regions lie at residues 4225-4248 (ADKP…YGLD) and 4272-4291 (VSFG…LPIS). Over residues 4228-4248 (PYSSGSRSRPSSRPSSVYGLD) the composition is skewed to low complexity. Residues 4275-4291 (GHSSSSARTKPTSLPIS) are compositionally biased toward polar residues. Phosphoserine is present on residues Ser-4304, Ser-4308, Ser-4311, Ser-4340, and Ser-4376. Residues 4335–4357 (RDQFGSSHSLPEVQQHMREESRT) form a disordered region. Positions 4442 to 4536 (RVKITRDFKD…EAEICVRLDL (95 aa)) constitute a PDZ domain. The segment at 4589–4638 (VEKGSHAHSGPTSAGSSSVPSPGQPGSPSVSKKKHSSTKPTDGPKAASHP) is disordered. Residues 4595 to 4618 (AHSGPTSAGSSSVPSPGQPGSPSV) show a composition bias toward low complexity. Ser-4609 is subject to Phosphoserine. Positions 4639–4768 (ITGEIQLQIN…SHLDNTPRWY (130 aa)) constitute a C2 1 domain. Residues Asp-4668 and Asp-4674 each coordinate Ca(2+). Residue Ser-4723 is modified to Phosphoserine. Positions 4738, 4740, 4743, and 4746 each coordinate Ca(2+). Disordered stretches follow at residues 4775–4851 (ESID…SVAQ) and 4874–4908 (QPTK…SEGS). Low complexity-rich tracts occupy residues 4783–4795 (HSSQ…PKPS) and 4822–4832 (SSPGSSKSSSE). Positions 4840–4851 (PSRSQSKTSVAQ) are enriched in polar residues. Over residues 4886 to 4908 (SSVSTGSSGSSVGSGYSVDSEGS) the composition is skewed to low complexity. Positions 4950–5075 (VMGEIKLALK…DLRKRIVNWH (126 aa)) constitute a C2 2 domain.

In terms of assembly, interacts with BSN, ERC2/CAST1, RIMS1 and UNC13A. Interacts (via C-terminus) with TRIO (via N-terminus). Interacts with CTBP1. Interacts with SIAH1; this interaction negatively regulates SIAH1 E3 ligase activity. Directly interacts with GIT1 and GIT2. Requires Ca(2+) as cofactor. In terms of tissue distribution, expressed in brain (at protein level).

The protein resides in the presynaptic active zone. Its function is as follows. Scaffold protein of the presynaptic cytomatrix at the active zone (CAZ) which is the place in the synapse where neurotransmitter is released. After synthesis, participates in the formation of Golgi-derived membranous organelles termed Piccolo-Bassoon transport vesicles (PTVs) that are transported along axons to sites of nascent synaptic contacts. At the presynaptic active zone, regulates the spatial organization of synaptic vesicle cluster, the protein complexes that execute membrane fusion and compensatory endocytosis. Organizes as well the readily releasable pool of synaptic vesicles and safeguards a fraction of them to be not immediately available for action potential-induced release. Also functions in processes other than assembly such as the regulation of specific presynaptic protein ubiquitination by interacting with SIAH1 or the regulation of presynaptic autophagy. Also mediates synapse to nucleus communication leading to reconfiguration of gene expression by associating with the transcriptional corepressor CTBP1 and by subsequently reducing the size of its pool available for nuclear import. This chain is Protein piccolo (Pclo), found in Rattus norvegicus (Rat).